A 154-amino-acid chain; its full sequence is Polyketide synthase CurC (154 aa).

One can recognise a Cupin type-2 domain in the interval 42 to 108 (LAIMRPGERI…NVGDEEARMV (67 aa)). The interval 133 to 154 (DVKAYPLVQEESGRPERPGVLS) is disordered. The segment covering 143–154 (ESGRPERPGVLS) has biased composition (basic and acidic residues).

It belongs to the SchB/CurC family.

It functions in the pathway antibiotic biosynthesis; curamycin biosynthesis. This is Polyketide synthase CurC (curC) from Streptomyces cyaneus (Streptomyces curacoi).